The chain runs to 145 residues: Superoxide dismutase [Mn/Fe] (145 aa).

The Fe(3+) site is built by His10 and His64. Mn(2+) contacts are provided by His10 and His64.

The protein belongs to the iron/manganese superoxide dismutase family. Requires Mn(2+) as cofactor. The cofactor is Fe(3+).

The catalysed reaction is 2 superoxide + 2 H(+) = H2O2 + O2. Destroys superoxide anion radicals which are normally produced within the cells and which are toxic to biological systems. Catalyzes the dismutation of superoxide anion radicals into O2 and H2O2 by successive reduction and oxidation of the transition metal ion at the active site. The protein is Superoxide dismutase [Mn/Fe] (sodA) of Streptococcus canis.